The chain runs to 418 residues: Sonic hedgehog protein (418 aa).

A signal peptide spans 1 to 23; that stretch reads MRLLTRVLLVSLLTLSLVVSGLA. The N-palmitoyl cysteine moiety is linked to residue cysteine 24. Positions 32–38 match the Cardin-Weintraub motif; sequence RRRHPKK. The Ca(2+) site is built by glutamate 89, glutamate 90, aspartate 95, threonine 125, glutamate 126, aspartate 129, and aspartate 131. Zn(2+) contacts are provided by histidine 140, aspartate 147, and histidine 182. A lipid anchor (Cholesterol glycine ester) is attached at glycine 197.

This sequence belongs to the hedgehog family. As to quaternary structure, interacts with HHATL/GUP1 which negatively regulates HHAT-mediated palmitoylation of the SHH N-terminus. Interacts with BOC and CDON. Interacts with HHIP. Interacts with DISP1 via its cholesterol anchor. Interacts with SCUBE2. In terms of assembly, multimer. In terms of processing, the C-terminal domain displays an autoproteolysis activity and a cholesterol transferase activity. Both activities result in the cleavage of the full-length protein and covalent attachment of a cholesterol moiety to the C-terminal of the newly generated N-terminal fragment (ShhN). Cholesterylation is required for the sonic hedgehog protein N-product targeting to lipid rafts and multimerization. ShhN is the active species in both local and long-range signaling, whereas the C-product (ShhC) is degraded in the reticulum endoplasmic. N-palmitoylation by HHAT of ShhN is required for sonic hedgehog protein N-product multimerization and full activity. It is a prerequisite for the membrane-proximal positioning and the subsequent shedding of this N-terminal peptide. Post-translationally, the lipidated N- and C-terminal peptides of ShhNp can be cleaved (shedding). The N-terminal palmitoylated peptide is cleaved at the Cardin-Weintraub (CW) motif site. The cleavage reduced the interactions with heparan sulfate. The cleavage is enhanced by SCUBE2. Expressed in the ventral midline of the neural tube and brain. Also found in the notochord and in developing fin bud. In the developing brain, expression occurs in domains that include a discrete region in the floor of the diencephalon.

Its subcellular location is the endoplasmic reticulum membrane. The protein resides in the golgi apparatus membrane. It localises to the cell membrane. It catalyses the reaction glycyl-L-cysteinyl-[protein] + cholesterol + H(+) = [protein]-C-terminal glycyl cholesterol ester + N-terminal L-cysteinyl-[protein]. In terms of biological role, the C-terminal part of the sonic hedgehog protein precursor displays an autoproteolysis and a cholesterol transferase activity. Both activities result in the cleavage of the full-length protein into two parts (ShhN and ShhC) followed by the covalent attachment of a cholesterol moiety to the C-terminal of the newly generated ShhN. Both activities occur in the endoplasmic reticulum. Once cleaved, ShhC is degraded in the endoplasmic reticulum. The dually lipidated sonic hedgehog protein N-product (ShhNp) is a morphogen which is essential for a variety of patterning events during development. Involved in dorso-ventral patterning of the brain and in early patterning of the developing eyes. Binds to the patched (PTCH1) receptor, which functions in association with smoothened (SMO), to activate the transcription of target genes. In the absence of SHH, PTCH1 represses the constitutive signaling activity of SMO. This Danio rerio (Zebrafish) protein is Sonic hedgehog protein (shha).